The following is a 740-amino-acid chain: Ion-translocating oxidoreductase complex subunit C (740 aa).

2 4Fe-4S ferredoxin-type domains span residues 369–397 and 407–436; these read GEPQ…QQLY and KATT…VQYF. Residues Cys377, Cys380, Cys383, Cys387, Cys416, Cys419, Cys422, and Cys426 each coordinate [4Fe-4S] cluster. 2 disordered regions span residues 602-621 and 660-718; these read KLEQ…PRKA and ARAK…RKAA. The span at 611–621 shows a compositional bias: basic and acidic residues; that stretch reads KPEEQVDPRKA.

Belongs to the 4Fe4S bacterial-type ferredoxin family. RnfC subfamily. The complex is composed of six subunits: RsxA, RsxB, RsxC, RsxD, RsxE and RsxG. Requires [4Fe-4S] cluster as cofactor.

The protein resides in the cell inner membrane. Its function is as follows. Part of a membrane-bound complex that couples electron transfer with translocation of ions across the membrane. Required to maintain the reduced state of SoxR. This Escherichia coli O9:H4 (strain HS) protein is Ion-translocating oxidoreductase complex subunit C.